Consider the following 1940-residue polypeptide: Myosin-2 (1940 aa).

The 50-residue stretch at 33-82 (DAKTSVFVAEPKESFVKGTVQSREGGKVTVKTEAGATLTVKEDQVFPMNP) folds into the Myosin N-terminal SH3-like domain. A phosphothreonine mark is found at threonine 64 and threonine 69. In terms of domain architecture, Myosin motor spans 86-783 (DKIEDMAMMT…LLGLLEEMRD (698 aa)). Position 130 is an N6,N6,N6-trimethyllysine (lysine 130). 179–186 (GESGAGKT) is a binding site for ATP. Residue tyrosine 389 is modified to Phosphotyrosine. The residue at position 392 (serine 392) is a Phosphoserine. Phosphothreonine is present on threonine 419. Phosphoserine is present on serine 625. The actin-binding stretch occupies residues 660–682 (LNKLMTNLRSTHPHFVRCIIPNE). A Pros-methylhistidine modification is found at histidine 758. The actin-binding stretch occupies residues 762–776 (KFGHTKVFFKAGLLG). In terms of domain architecture, IQ spans 786–815 (LAQLITRTQARCRGFLARVEYQKMVERRES). The stretch at 844 to 1940 (LLKSAETEKE…EVHTKVISEE (1097 aa)) forms a coiled coil. 4 positions are modified to phosphoserine: serine 1093, serine 1097, serine 1163, and serine 1238. A disordered region spans residues 1154-1173 (RLEEAGGATSAQIEMNKKRE). Threonine 1242 carries the phosphothreonine modification. A Phosphoserine modification is found at serine 1244. Threonine 1256 carries the post-translational modification Phosphothreonine. Serine 1262 carries the phosphoserine modification. Residue threonine 1287 is modified to Phosphothreonine. Phosphoserine is present on residues serine 1289, serine 1293, serine 1304, and serine 1307. A Phosphotyrosine modification is found at tyrosine 1465. Phosphothreonine is present on threonine 1468. At serine 1475 the chain carries Phosphoserine. Residue tyrosine 1493 is modified to Phosphotyrosine. The residue at position 1496 (serine 1496) is a Phosphoserine. Threonine 1502 carries the phosphothreonine modification. Serine 1515 is subject to Phosphoserine. The residue at position 1518 (threonine 1518) is a Phosphothreonine. 6 positions are modified to phosphoserine: serine 1543, serine 1555, serine 1575, serine 1601, serine 1715, and serine 1727. Threonine 1731 and threonine 1737 each carry phosphothreonine. At serine 1740 the chain carries Phosphoserine. The disordered stretch occupies residues 1884 to 1920 (KRQAEEAEEQSNTNLSKFRKLQHELEEAEERADIAES).

This sequence belongs to the TRAFAC class myosin-kinesin ATPase superfamily. Myosin family. Muscle myosin is a hexameric protein that consists of 2 heavy chain subunits (MHC), 2 alkali light chain subunits (MLC) and 2 regulatory light chain subunits (MLC-2). Interacts with GCSAM.

The protein resides in the cytoplasm. It is found in the myofibril. In terms of biological role, myosins are actin-based motor molecules with ATPase activity essential for muscle contraction. The chain is Myosin-2 (MYH2) from Canis lupus familiaris (Dog).